The following is a 570-amino-acid chain: nebramycin 5' synthase (570 aa).

The tract at residues 1–354 (MRVLGLNGWP…AAAAVAVELG (354 aa)) is kae1-like. D12 lines the tobramycin pocket. Catalysis depends on H14, which acts as the Proton acceptor. Residue K39 coordinates ATP. 3 residues coordinate Fe cation: H114, H118, and D137. Carbamoyl adenylate contacts are provided by Q139, G168, and E172. Residues E172 and D228 each coordinate tobramycin. Carbamoyl adenylate-binding residues include G310 and N314. D338 provides a ligand contact to Fe cation. The interval 367 to 570 (GPEFSPDQVR…PYLVTKDLRH (204 aa)) is yrdC-like. The ATP site is built by R418 and R449. Residue 418–419 (RA) participates in carbamoyl phosphate binding. Carbamoyl phosphate-binding positions include R498 and 528 to 530 (NTS).

This sequence belongs to the NodU/CmcH family. It depends on Fe(2+) as a cofactor.

The enzyme catalyses tobramycin + carbamoyl phosphate + ATP + H2O = nebramycin 5' + AMP + phosphate + diphosphate + H(+). It catalyses the reaction kanamycin A + carbamoyl phosphate + ATP + H2O = 6''-O-carbamoylkanamycin A + AMP + phosphate + diphosphate + H(+). It carries out the reaction carbamoyl phosphate + ATP + H2O = carbamoyl adenylate + phosphate + diphosphate. The catalysed reaction is tobramycin + carbamoyl adenylate = nebramycin 5' + AMP + H(+). The enzyme catalyses carbamoyl adenylate + kanamycin A = 6''-O-carbamoylkanamycin A + AMP + H(+). It functions in the pathway antibiotic biosynthesis; kanamycin biosynthesis. The protein operates within antibiotic biosynthesis; tobramycin biosynthesis. With respect to regulation, ADP inhibits the formation of nebramycin 5'. TobZ is involved in the biosynthesis of the 2-deoxystreptamine-containing aminoglycoside antibiotics such as nebramycin 5 and 6-O-carbamoylkanamycin. Catalyzes the hydrolysis of carbamoyl phosphate and its subsequent adenylation by ATP to yield O-carbamoyladenylate. Then it catalyzes the transfer of the carbamoyl moiety from O-carbamoyladenylate to the tobramycin 6-hydroxy group to yield nebramycin 5'. It catalyzes the same reaction with kanamycin A. These reactions are considerably slower in the presence of deoxy-ATP. This chain is nebramycin 5' synthase (tobZ), found in Streptoalloteichus tenebrarius (strain ATCC 17920 / DSM 40477 / JCM 4838 / CBS 697.72 / NBRC 16177 / NCIMB 11028 / NRRL B-12390 / A12253. 1 / ISP 5477) (Streptomyces tenebrarius).